Reading from the N-terminus, the 395-residue chain is GPI-anchor transamidase (395 aa).

Residues methionine 1–alanine 27 form the signal peptide. The Lumenal portion of the chain corresponds to serine 28 to glycine 368. Ca(2+)-binding residues include aspartate 79, isoleucine 82, glutamate 118, and aspartate 120. Catalysis depends on histidine 164, which acts as the Proton donor. The active-site Nucleophile; acyl-thioester intermediate is the cysteine 206. 3 residues coordinate a protein: cysteine 206, serine 232, and serine 234. The interval aspartate 231–glutamine 236 is autoinhibitory loop. The cysteines at positions 275 and 280 are disulfide-linked. A helical transmembrane segment spans residues glycine 369–threonine 385. Residues tyrosine 386–phenylalanine 395 are Cytoplasmic-facing.

This sequence belongs to the peptidase C13 family. Heteropentamer. Part of the GPI-anchor transamidase complex, consisting of PIGK, PIGT, PIGS, PIGU and GAA1. Interacts with GPAA1. Interacts with PIGT; this interaction, via a disulfide link, stabilizes the expression of GAA1 and PIGK and links them to PIGS. The disulfide bond between PIGK/GPI8 and PIGT is important for normal enzyme activity.

It is found in the endoplasmic reticulum membrane. It participates in glycolipid biosynthesis; glycosylphosphatidylinositol-anchor biosynthesis. In the absence of proproteins substrates, exists in an inactive state with a disrupted catalytic site by an autoinhibitory loop. The binding of proprotein substrates, particularly the CSP region, to GPI-T triggers concerted conformational changes that alleviate the inhibition by the autoinhibitory loop. Meanwhile, proprotein residues near the omega- site induce the formation of a catalytic cleft for catalysis, following which the products are released and GPI-T reverts to the inactive state. Functionally, catalytic subunit of the glycosylphosphatidylinositol-anchor (GPI-anchor) transamidase (GPI-T) complex that catalyzes the formation of the linkage between a proprotein and a GPI-anchor and participates in GPI anchored protein biosynthesis. Recognizes diverse proproteins at a C-terminal signal peptide (CSP) region that lacks consensus sequence and replaces it with a GPI-anchor via a transamidation reaction. Transamidation catalysis reaction follows a two-phase mechanism. In the acyl-enzyme phase, the carbonyl group of the proproteins's omega-site undergoes a nucleophilic attack forming an enzyme-substrate thioester bond. Followed by a general acid catalysis that allows CSP releasing, regenerating the carbonyl, and forming the acyl-enzyme intermediate. In the GPI-anchor attachment phase, the amino group of the GPI-anchor's ethanolamine phosphate, the one on third mannose (EtNP3), mediates a nucleophilic attack on the carbonyl of the acyl-enzyme intermediate, replacing the CSP, allowing GPI-anchor attachment to the omega-residue, therefore forming the product and freeing the enzyme. The protein is GPI-anchor transamidase of Homo sapiens (Human).